A 257-amino-acid polypeptide reads, in one-letter code: Snake venom serine protease KN2 (257 aa).

An N-terminal signal peptide occupies residues 1 to 18 (MVLIRVLANLLILQLSYA). Positions 19-24 (QKSSEL) are excised as a propeptide. The Peptidase S1 domain maps to 25-248 (VIGGHPCNIN…HLDWIKSIIA (224 aa)). 6 cysteine pairs are disulfide-bonded: Cys31-Cys162, Cys49-Cys65, Cys97-Cys255, Cys141-Cys209, Cys173-Cys188, and Cys199-Cys224. Active-site charge relay system residues include His64 and Asp109. Residues Asn120 and Asn121 are each glycosylated (N-linked (GlcNAc...) asparagine). The Charge relay system role is filled by Ser203.

This sequence belongs to the peptidase S1 family. Snake venom subfamily. Monomer. In terms of tissue distribution, expressed by the venom gland.

The protein resides in the secreted. In terms of biological role, snake venom serine protease that may act in the hemostasis system of the prey. The protein is Snake venom serine protease KN2 of Trimeresurus stejnegeri (Chinese green tree viper).